A 534-amino-acid chain; its full sequence is Thromboxane-A synthase (534 aa).

Over 1–10 (MEVLGFLSPE) the chain is Cytoplasmic. Residues 11–31 (LNGPMVTMALAVVLLALLKWY) form a helical membrane-spanning segment. Residues 32-75 (STSAFSRLEKLGIRHPKPSPFIGNLTFFRQGFWESHMELRKQYG) are Lumenal-facing. Residues 76 to 96 (PLSGYYLGRRMIVVISDPDMI) form a helical membrane-spanning segment. Over 97–223 (KQVLAEKFSN…RRFFAFSVPR (127 aa)) the chain is Cytoplasmic. The helical transmembrane segment at 224–244 (LILVLILSFPSIMVPLARILP) threads the bilayer. Over 245–336 (NKKRDEVNGF…LTVDEVVGQA (92 aa)) the chain is Lumenal. A helical membrane pass occupies residues 337–357 (FLFLIAGYEIITNTLSFVTYL). The Cytoplasmic segment spans residues 358 to 534 (LATNPDCQEK…NGVYIRIVPR (177 aa)). Cys480 contributes to the heme binding site.

It belongs to the cytochrome P450 family. In terms of assembly, monomer. The cofactor is heme. In terms of tissue distribution, expressed in lung, kidney and thymus.

Its subcellular location is the endoplasmic reticulum membrane. It carries out the reaction prostaglandin H2 = thromboxane A2. The enzyme catalyses prostaglandin H2 = (12S)-hydroxy-(5Z,8E,10E)-heptadecatrienoate + malonaldehyde. It catalyses the reaction a hydroperoxyeicosatetraenoate = an oxoeicosatetraenoate + H2O. The catalysed reaction is (15S)-hydroperoxy-(5Z,8Z,11Z,13E)-eicosatetraenoate = 15-oxo-(5Z,8Z,11Z,13E)-eicosatetraenoate + H2O. It carries out the reaction (15S)-hydroperoxy-(5Z,8Z,11Z,13E)-eicosatetraenoate + AH2 = (15S)-hydroxy-(5Z,8Z,11Z,13E)-eicosatetraenoate + A + H2O. In terms of biological role, catalyzes the conversion of prostaglandin H2 (PGH2) to thromboxane A2 (TXA2), a potent inducer of blood vessel constriction and platelet aggregation. Also cleaves PGH2 to 12-hydroxy-heptadecatrienoicacid (12-HHT) and malondialdehyde, which is known to act as a mediator of DNA damage. 12-HHT and malondialdehyde are formed stoichiometrically in the same amounts as TXA2. Additionally, displays dehydratase activity, toward (15S)-hydroperoxy-(5Z,8Z,11Z,13E)-eicosatetraenoate (15(S)-HPETE) producing 15-KETE and 15-HETE. This is Thromboxane-A synthase (TBXAS1) from Sus scrofa (Pig).